Reading from the N-terminus, the 384-residue chain is ATP phosphoribosyltransferase regulatory subunit (384 aa).

Belongs to the class-II aminoacyl-tRNA synthetase family. HisZ subfamily. Heteromultimer composed of HisG and HisZ subunits.

The protein localises to the cytoplasm. It functions in the pathway amino-acid biosynthesis; L-histidine biosynthesis; L-histidine from 5-phospho-alpha-D-ribose 1-diphosphate: step 1/9. Required for the first step of histidine biosynthesis. May allow the feedback regulation of ATP phosphoribosyltransferase activity by histidine. This chain is ATP phosphoribosyltransferase regulatory subunit, found in Azoarcus sp. (strain BH72).